The following is a 523-amino-acid chain: ATP synthase subunit alpha (523 aa).

179 to 186 (GDRQTGKT) contacts ATP.

It belongs to the ATPase alpha/beta chains family. In terms of assembly, F-type ATPases have 2 components, CF(1) - the catalytic core - and CF(0) - the membrane proton channel. CF(1) has five subunits: alpha(3), beta(3), gamma(1), delta(1), epsilon(1). CF(0) has three main subunits: a(1), b(2) and c(9-12). The alpha and beta chains form an alternating ring which encloses part of the gamma chain. CF(1) is attached to CF(0) by a central stalk formed by the gamma and epsilon chains, while a peripheral stalk is formed by the delta and b chains.

The protein localises to the cell inner membrane. The catalysed reaction is ATP + H2O + 4 H(+)(in) = ADP + phosphate + 5 H(+)(out). In terms of biological role, produces ATP from ADP in the presence of a proton gradient across the membrane. The alpha chain is a regulatory subunit. The chain is ATP synthase subunit alpha from Vibrio parahaemolyticus serotype O3:K6 (strain RIMD 2210633).